Reading from the N-terminus, the 297-residue chain is UDP-N-acetylenolpyruvoylglucosamine reductase (297 aa).

Residues 22–195 (RAGGTARYYA…LAGRFRLQRG (174 aa)) form the FAD-binding PCMH-type domain. Arginine 169 is a catalytic residue. Serine 223 (proton donor) is an active-site residue. Glutamate 293 is an active-site residue.

It belongs to the MurB family. FAD is required as a cofactor.

The protein resides in the cytoplasm. The catalysed reaction is UDP-N-acetyl-alpha-D-muramate + NADP(+) = UDP-N-acetyl-3-O-(1-carboxyvinyl)-alpha-D-glucosamine + NADPH + H(+). It functions in the pathway cell wall biogenesis; peptidoglycan biosynthesis. Functionally, cell wall formation. This Chloroflexus aurantiacus (strain ATCC 29364 / DSM 637 / Y-400-fl) protein is UDP-N-acetylenolpyruvoylglucosamine reductase.